The primary structure comprises 728 residues: Dehydrocurvularin biosynthesis regulator (728 aa).

Residues 28 to 58 (CWECKRRKMKCRFDPRIASACNGCRRRGSPC) constitute a DNA-binding region (zn(2)-C6 fungal-type). 2 disordered regions span residues 75 to 130 (GTTS…TSQR) and 606 to 626 (QHATTASKPPVDRSPSSNSDA). Residues 89–109 (RATTPSERTDQILTPVSTVRE) show a composition bias toward polar residues.

It localises to the nucleus. Its function is as follows. Transcription factor involved in regulation of the dehydrocurvularin biosynthesis gene cluster. The chain is Dehydrocurvularin biosynthesis regulator from Aspergillus terreus.